The following is a 435-amino-acid chain: Asparagine--tRNA ligase (435 aa).

Belongs to the class-II aminoacyl-tRNA synthetase family. As to quaternary structure, homodimer.

The protein localises to the cytoplasm. It carries out the reaction tRNA(Asn) + L-asparagine + ATP = L-asparaginyl-tRNA(Asn) + AMP + diphosphate + H(+). This is Asparagine--tRNA ligase from Leptospira interrogans serogroup Icterohaemorrhagiae serovar copenhageni (strain Fiocruz L1-130).